Here is a 68-residue protein sequence, read N- to C-terminus: Alpha-conotoxin-like Mr1.2 (68 aa).

The N-terminal stretch at 1–21 (MGMRMMFTVFLLVVLATTVVS) is a signal peptide. A propeptide spanning residues 22–48 (FTSDRGSDGRNAAAKDKASDLVALTVK) is cleaved from the precursor. 2 disulfides stabilise this stretch: C50–C56 and C51–C64. The interval 52–54 (SNP) is ser-Xaa-Pro motif, crucial for potent interaction with nAChR. N65 bears the Asparagine amide mark.

This sequence belongs to the conotoxin A superfamily. As to expression, expressed by the venom duct.

The protein resides in the secreted. Alpha-conotoxins act on postsynaptic membranes, they bind to the nicotinic acetylcholine receptors (nAChR) and thus inhibit them. This chain is Alpha-conotoxin-like Mr1.2, found in Conus marmoreus (Marble cone).